A 162-amino-acid chain; its full sequence is Dihydrofolate reductase (162 aa).

A DHFR domain is found at 3–161 (KITLIAACAE…TRYAFVHYLR (159 aa)). A substrate-binding site is contributed by 7–9 (IAA). NADP(+) contacts are provided by residues 8-9 (AA) and 16-21 (IGAGNA). Substrate is bound at residue D29. 45–48 (GRKT) serves as a coordination point for NADP(+). R60 is a binding site for substrate. Residues 65–68 (ISRQ) and 98–103 (MGGAQI) each bind NADP(+). Substrate is bound at residue T117.

It belongs to the dihydrofolate reductase family.

The enzyme catalyses (6S)-5,6,7,8-tetrahydrofolate + NADP(+) = 7,8-dihydrofolate + NADPH + H(+). It functions in the pathway cofactor biosynthesis; tetrahydrofolate biosynthesis; 5,6,7,8-tetrahydrofolate from 7,8-dihydrofolate: step 1/1. Functionally, key enzyme in folate metabolism. Catalyzes an essential reaction for de novo glycine and purine synthesis, and for DNA precursor synthesis. This is Dihydrofolate reductase (folA) from Neisseria meningitidis serogroup B (strain ATCC BAA-335 / MC58).